A 515-amino-acid chain; its full sequence is MDKKNGGFDLESEIRRLDVSKEFKIEDNLKKKVVKVVAKKDSASSVTKSADLSGVKDSNGVIFSDFDYDIPSSGLENNIKTLEQSNIIKFFNGKDYVEIEKLYDKPITEVRKIVEGLGTNHTIAVTMKKTELIFLLVKILSENNIDVLFTGVLDVLSDGYGFLRTASNSYLSGGNDVYVSPSQIRLFNLRTGDILYGQIRSPRDGERFFAMVKIKSINDQDPTFAQNRIPFDNLTPLYPNVKLNLEYENCNISTRLINLFSPIGKGQRALIVSPPKAGKTTLLQKIANAITTNYSDVILMILLIDERPEEVTDMIRSVKGEVIASNFDEQASRHVQVAEMVIEKAKRLVENKKDVVILLDSITRLARAYNQTMPTSGKILSGGVDSNALHKPKRFFGSARNIEEGGSLTIIATALVDTGSKMDEVIFEEFKSTGNMELILDRSLADRRLFPAINIKKSGTRKEELLLSEEERSKILLIRRILGGVDDYEGVEVLIEKMKKSKNNEIFLKTMSNGN.

The 76-residue stretch at 146-221 (DVLFTGVLDV…VKIKSINDQD (76 aa)) folds into the Rho RNA-BD domain. Residues 264-269 (GKGQRA), 276-281 (KAGKTT), and Arg-307 contribute to the ATP site.

Belongs to the Rho family. In terms of assembly, homohexamer. The homohexamer assembles into an open ring structure.

Functionally, facilitates transcription termination by a mechanism that involves Rho binding to the nascent RNA, activation of Rho's RNA-dependent ATPase activity, and release of the mRNA from the DNA template. This chain is Transcription termination factor Rho, found in Borreliella burgdorferi (strain ATCC 35210 / DSM 4680 / CIP 102532 / B31) (Borrelia burgdorferi).